Reading from the N-terminus, the 200-residue chain is uncharacterized protein (200 aa).

This is an uncharacterized protein from Haemophilus phage HP1 (strain HP1c1) (Bacteriophage HP1).